Here is a 72-residue protein sequence, read N- to C-terminus: Translation initiation factor IF-1 (72 aa).

An S1-like domain is found at 1–72 (MSKDDVIEMQ…TRGRITWRAK (72 aa)).

The protein belongs to the IF-1 family. Component of the 30S ribosomal translation pre-initiation complex which assembles on the 30S ribosome in the order IF-2 and IF-3, IF-1 and N-formylmethionyl-tRNA(fMet); mRNA recruitment can occur at any time during PIC assembly.

It localises to the cytoplasm. In terms of biological role, one of the essential components for the initiation of protein synthesis. Stabilizes the binding of IF-2 and IF-3 on the 30S subunit to which N-formylmethionyl-tRNA(fMet) subsequently binds. Helps modulate mRNA selection, yielding the 30S pre-initiation complex (PIC). Upon addition of the 50S ribosomal subunit IF-1, IF-2 and IF-3 are released leaving the mature 70S translation initiation complex. This chain is Translation initiation factor IF-1, found in Clostridium beijerinckii (strain ATCC 51743 / NCIMB 8052) (Clostridium acetobutylicum).